The following is a 428-amino-acid chain: Bifunctional IPC transferase and DIPP synthase (428 aa).

The tract at residues 2-227 (VETAVILAGG…KAKKYLVKTA (226 aa)) is mobA-like NTP transferase. Residues 8-10 (LAG), Lys-25, Glu-80, and Glu-116 contribute to the CTP site. Glu-116 serves as a coordination point for Mg(2+). The CDP-alcohol phosphatidyltransferases stretch occupies residues 228 to 425 (IKGVGDGFIS…LTIYLVWKKK (198 aa)). Helical transmembrane passes span 266–286 (FLLG…GGIL), 336–356 (PSWD…MVSY), and 389–409 (MIMI…LAII).

It in the N-terminal section; belongs to the MobA family. This sequence in the C-terminal section; belongs to the CDP-alcohol phosphatidyltransferase class-I family. Mg(2+) is required as a cofactor.

The protein localises to the membrane. It catalyses the reaction 1D-myo-inositol 3-phosphate + CTP + H(+) = CDP-1L-myo-inositol + diphosphate. The enzyme catalyses CDP-1L-myo-inositol + 1D-myo-inositol 3-phosphate = bis(1L-myo-inositol) 3,1'-phosphate 1-phosphate + CMP + H(+). Its function is as follows. Involved in biosynthesis of di-myo-inositol phosphate (DIP), a widespread organic solute in microorganisms adapted to hot environments. Catalyzes the condensation of CTP and L-myo-inositol-1-phosphate into CDP-L-myo-inositol, as well as the biosynthesis of di-myo-inositol-1,3'-phosphate-1'-phosphate (DIPP) from CDP-L-myo-inositol and L-myo-inositol-1-phosphate. This chain is Bifunctional IPC transferase and DIPP synthase (spsI), found in Aquifex aeolicus (strain VF5).